Reading from the N-terminus, the 433-residue chain is 28S rRNA (cytosine-C(5))-methyltransferase (433 aa).

Residues 235–241, E259, D286, and D304 contribute to the S-adenosyl-L-methionine site; that span reads CAAPGMK. The active-site Nucleophile is the C357.

This sequence belongs to the class I-like SAM-binding methyltransferase superfamily. RsmB/NOP family.

It catalyses the reaction a cytidine in 28S rRNA + S-adenosyl-L-methionine = a 5-methylcytidine in 28S rRNA + S-adenosyl-L-homocysteine + H(+). In terms of biological role, S-adenosyl-L-methionine-dependent methyltransferase that specifically methylates the C(5) position of a cytosine in 28S rRNA. This Drosophila melanogaster (Fruit fly) protein is 28S rRNA (cytosine-C(5))-methyltransferase.